Reading from the N-terminus, the 339-residue chain is Glyceraldehyde-3-phosphate dehydrogenase (339 aa).

Residues R13 to I14, D35, and K84 each bind NAD(+). D-glyceraldehyde 3-phosphate is bound by residues S156–T158, T187, T216–G217, and R239. Catalysis depends on C157, which acts as the Nucleophile. An NAD(+)-binding site is contributed by N321.

Belongs to the glyceraldehyde-3-phosphate dehydrogenase family. As to quaternary structure, homotetramer.

Its subcellular location is the cytoplasm. The enzyme catalyses D-glyceraldehyde 3-phosphate + phosphate + NAD(+) = (2R)-3-phospho-glyceroyl phosphate + NADH + H(+). The protein operates within carbohydrate degradation; glycolysis; pyruvate from D-glyceraldehyde 3-phosphate: step 1/5. In Brugia malayi (Filarial nematode worm), this protein is Glyceraldehyde-3-phosphate dehydrogenase (G3PD).